Reading from the N-terminus, the 229-residue chain is Large ribosomal subunit protein uL1 (229 aa).

It belongs to the universal ribosomal protein uL1 family. Part of the 50S ribosomal subunit.

Binds directly to 23S rRNA. The L1 stalk is quite mobile in the ribosome, and is involved in E site tRNA release. In terms of biological role, protein L1 is also a translational repressor protein, it controls the translation of the L11 operon by binding to its mRNA. This is Large ribosomal subunit protein uL1 from Streptococcus pneumoniae serotype 2 (strain D39 / NCTC 7466).